Here is a 285-residue protein sequence, read N- to C-terminus: Nucleotide-binding protein Psyr_4150 (285 aa).

ATP is bound at residue 8–15 (GRSGSGKS). GTP is bound at residue 60–63 (DARN).

Belongs to the RapZ-like family.

Functionally, displays ATPase and GTPase activities. In Pseudomonas syringae pv. syringae (strain B728a), this protein is Nucleotide-binding protein Psyr_4150.